A 144-amino-acid polypeptide reads, in one-letter code: Large ribosomal subunit protein uL13 (144 aa).

The protein belongs to the universal ribosomal protein uL13 family. In terms of assembly, part of the 50S ribosomal subunit.

Its function is as follows. This protein is one of the early assembly proteins of the 50S ribosomal subunit, although it is not seen to bind rRNA by itself. It is important during the early stages of 50S assembly. The polypeptide is Large ribosomal subunit protein uL13 (Mycoplasmopsis synoviae (strain 53) (Mycoplasma synoviae)).